A 142-amino-acid polypeptide reads, in one-letter code: Virulence-associated membrane protein 1 (142 aa).

The first 20 residues, M1–A20, serve as a signal peptide directing secretion. Residues I59–L79 traverse the membrane as a helical segment.

In terms of assembly, monomer.

The protein localises to the membrane. During infection, may play a role in establishing and maintaining biotrophy; the formation of a tight interaction zone between the host and the pathogen. The protein is Virulence-associated membrane protein 1 of Mycosarcoma maydis (Corn smut fungus).